Reading from the N-terminus, the 413-residue chain is MPSAKSTPDTPWPVRDVNNQVKNWIERLGHLWVEGQLAQINVKPNWKLSYLTLRDVEQEVSVQLTCPTEIIRNRPTPLKDGDRVIVYGKPAFYAGRGSFSLWVTDIRPVGIGQLLARIEELRRQLAAEGLFDPARKKRLPFLPKCVGLITGRGSAAERDVLSVARDRWPEVQFKVINTAVQGASAVPEIIAALGELDQDPGVDVIIIARGGGSVEDLLPFSEEALQRAVAAAQTPVVSAIGHEPDTPILDNVADLRAATPTDAAKRVVPDVNEERLLIRQLRDRGAAALRGWVAREQQALASIRTRPVLADPMTPIVRRREEVERAVSLLRRDVNHMLRTEQSLVASLRAQVSALGPSATLARGYSVVQVVPRDGTPPQVVTTIEQTPPGSQLRIRVADGAITAAAMNTQKSD.

Belongs to the XseA family. Heterooligomer composed of large and small subunits.

It is found in the cytoplasm. The catalysed reaction is Exonucleolytic cleavage in either 5'- to 3'- or 3'- to 5'-direction to yield nucleoside 5'-phosphates.. Bidirectionally degrades single-stranded DNA into large acid-insoluble oligonucleotides, which are then degraded further into small acid-soluble oligonucleotides. The sequence is that of Exodeoxyribonuclease 7 large subunit from Corynebacterium efficiens (strain DSM 44549 / YS-314 / AJ 12310 / JCM 11189 / NBRC 100395).